We begin with the raw amino-acid sequence, 155 residues long: Small ribosomal subunit protein uS7cz/uS7cy (155 aa).

This sequence belongs to the universal ribosomal protein uS7 family. As to quaternary structure, part of the 30S ribosomal subunit.

The protein localises to the plastid. The protein resides in the chloroplast. Functionally, one of the primary rRNA binding proteins, it binds directly to 16S rRNA where it nucleates assembly of the head domain of the 30S subunit. The protein is Small ribosomal subunit protein uS7cz/uS7cy (rps7-A) of Amborella trichopoda.